Consider the following 611-residue polypeptide: MAMRSHYCGLVTDTLLGQTVTLCGWVNRRRDHGGVIFVDIRDREGYVQVVCDPDRADMFKVAEGLRNEFCIQVKGLVRARPEGTVNEGLKSGKIEVLCHELTVLNPSVTPPFQLDDDNLSETTRLTHRVLDLRRPYMQNNLMLRYRVAMEVRKFLDANGFVDIETPMLGKSTPEGARDYLVPSRVHEGHFFALPQSPQLFKQLLMVAGFDRYYQITKCFRDEDLRADRQPEFTQIDIETSFLSEQDIRDLFQEMITTVFKTTLNVDLGEFPVMAYSEAMHRYGSDKPDLRVKLEFTELTDVMTDVDFKVFSGAATMKGGRVVGLRIPGGAREVGGLSRGEIDAYAEFVKIYGAKGLAYIKVNELAKGPGDKALRWPGLQSPIVKNIHDKAIAEVLARTGAQDGDLIFFGADKAKIVNDAIGALRIKIGHSEFGKKNALFEKSWRPMWVVDFPMFEFDEEAQRYTAVHHPFTAPKEGHEDWMVTAPEKCISQGYDMVLNGWEMGGGSVRIHRADVQQKVFDALKISPEEAQDKFGFLLDALQYGAPPHGGLAFGLDRIITLMTGAESIRDVIAFPKTQRAQCLLTQAPSPVDEKQLRELHIRLRTPEPIKAA.

E174 is a binding site for L-aspartate. The segment at 198–201 (QLFK) is aspartate. Residue R220 coordinates L-aspartate. Residues 220 to 222 (RDE) and Q229 each bind ATP. H467 serves as a coordination point for L-aspartate. E501 is a binding site for ATP. L-aspartate is bound at residue R508. 553 to 556 (GLDR) contacts ATP.

Belongs to the class-II aminoacyl-tRNA synthetase family. Type 1 subfamily. Homodimer.

It is found in the cytoplasm. The catalysed reaction is tRNA(Asx) + L-aspartate + ATP = L-aspartyl-tRNA(Asx) + AMP + diphosphate. Its function is as follows. Aspartyl-tRNA synthetase with relaxed tRNA specificity since it is able to aspartylate not only its cognate tRNA(Asp) but also tRNA(Asn). Reaction proceeds in two steps: L-aspartate is first activated by ATP to form Asp-AMP and then transferred to the acceptor end of tRNA(Asp/Asn). In Albidiferax ferrireducens (strain ATCC BAA-621 / DSM 15236 / T118) (Rhodoferax ferrireducens), this protein is Aspartate--tRNA(Asp/Asn) ligase.